The primary structure comprises 253 residues: Ribosome maturation protein SBDS (253 aa).

It belongs to the SDO1/SBDS family. In terms of assembly, associates with the 60S ribosomal subunit.

It is found in the cytoplasm. Its subcellular location is the nucleus. The protein resides in the nucleolus. It localises to the nucleoplasm. The protein localises to the cytoskeleton. It is found in the spindle. Functionally, required for the assembly of mature ribosomes and ribosome biogenesis. Together with K10C3.5b/EFL1, triggers the GTP-dependent release of ribosome maturation factors from 60S pre-ribosomes in the cytoplasm, thereby activating ribosomes for translation competence by allowing 80S ribosome assembly. Required for normal levels of protein synthesis. May play a role in cellular stress resistance. May play a role in cellular response to DNA damage. May play a role in cell proliferation. The sequence is that of Ribosome maturation protein SBDS (sbds-1) from Caenorhabditis elegans.